The primary structure comprises 195 residues: Imidazoleglycerol-phosphate dehydratase (195 aa).

The protein belongs to the imidazoleglycerol-phosphate dehydratase family.

The protein resides in the cytoplasm. The enzyme catalyses D-erythro-1-(imidazol-4-yl)glycerol 3-phosphate = 3-(imidazol-4-yl)-2-oxopropyl phosphate + H2O. It participates in amino-acid biosynthesis; L-histidine biosynthesis; L-histidine from 5-phospho-alpha-D-ribose 1-diphosphate: step 6/9. The chain is Imidazoleglycerol-phosphate dehydratase from Frankia casuarinae (strain DSM 45818 / CECT 9043 / HFP020203 / CcI3).